A 189-amino-acid polypeptide reads, in one-letter code: Protein CURLY FLAG LEAF 1 (189 aa).

Positions 50–55 match the EAR motif; it reads TLELNS. Residues 57–91 form the WW domain; it reads LSLPCHWEQCLDLKTGEIYYINWKNGMRVKEDPRK. Residues 90–148 are disordered; it reads RKVMNADPDSGDSYGTVCSEEDSSYYDSEESSSESSPSSRENHKEEEEEEEEEEEEEED. Acidic residues-rich tracts occupy residues 108 to 121 and 135 to 148; these read SEED…EESS and EEEE…EEED.

As to quaternary structure, interacts with BHLH122/CFLAP1 and BHLH80/CFLAP2. Binds to HDG1. In terms of tissue distribution, mostly observed in roots, flowers and siliques. Expressed in cells differentiated from epidermal cells such as trichomes, stigmatic papillar cells and guard cells, as well as in tissues undergoing abscission and dehiscence.

Negatively regulates the cuticle development by interacting with the HD-ZIP IV transcription factor HDG1. This chain is Protein CURLY FLAG LEAF 1, found in Arabidopsis thaliana (Mouse-ear cress).